The primary structure comprises 341 residues: UDP-N-acetylenolpyruvoylglucosamine reductase (341 aa).

The 171-residue stretch at 15–185 folds into the FAD-binding PCMH-type domain; the sequence is VTQSCLSLIE…TAVGLRLPKT (171 aa). Arg-161 is an active-site residue. Catalysis depends on Ser-231, which acts as the Proton donor. The active site involves Glu-327.

Belongs to the MurB family. FAD is required as a cofactor.

Its subcellular location is the cytoplasm. The enzyme catalyses UDP-N-acetyl-alpha-D-muramate + NADP(+) = UDP-N-acetyl-3-O-(1-carboxyvinyl)-alpha-D-glucosamine + NADPH + H(+). The protein operates within cell wall biogenesis; peptidoglycan biosynthesis. Cell wall formation. This Shewanella oneidensis (strain ATCC 700550 / JCM 31522 / CIP 106686 / LMG 19005 / NCIMB 14063 / MR-1) protein is UDP-N-acetylenolpyruvoylglucosamine reductase.